A 219-amino-acid polypeptide reads, in one-letter code: Imidazole glycerol phosphate synthase subunit HisH (219 aa).

The Glutamine amidotransferase type-1 domain occupies Lys-2–Gly-218. The Nucleophile role is filled by Cys-87. Residues His-193 and Glu-195 contribute to the active site.

Heterodimer of HisH and HisF.

It localises to the cytoplasm. It carries out the reaction 5-[(5-phospho-1-deoxy-D-ribulos-1-ylimino)methylamino]-1-(5-phospho-beta-D-ribosyl)imidazole-4-carboxamide + L-glutamine = D-erythro-1-(imidazol-4-yl)glycerol 3-phosphate + 5-amino-1-(5-phospho-beta-D-ribosyl)imidazole-4-carboxamide + L-glutamate + H(+). The catalysed reaction is L-glutamine + H2O = L-glutamate + NH4(+). Its pathway is amino-acid biosynthesis; L-histidine biosynthesis; L-histidine from 5-phospho-alpha-D-ribose 1-diphosphate: step 5/9. Its function is as follows. IGPS catalyzes the conversion of PRFAR and glutamine to IGP, AICAR and glutamate. The HisH subunit catalyzes the hydrolysis of glutamine to glutamate and ammonia as part of the synthesis of IGP and AICAR. The resulting ammonia molecule is channeled to the active site of HisF. The chain is Imidazole glycerol phosphate synthase subunit HisH from Granulibacter bethesdensis (strain ATCC BAA-1260 / CGDNIH1).